The primary structure comprises 291 residues: Small ribosomal subunit protein uS2 (291 aa).

Residues Leu-256–Val-291 form a disordered region. A compositionally biased stretch (low complexity) spans Thr-261–Val-291.

Belongs to the universal ribosomal protein uS2 family.

In Frankia alni (strain DSM 45986 / CECT 9034 / ACN14a), this protein is Small ribosomal subunit protein uS2.